The following is a 224-amino-acid chain: Deoxyribose-phosphate aldolase (224 aa).

Asp-93 (proton donor/acceptor) is an active-site residue. The active-site Schiff-base intermediate with acetaldehyde is the Lys-159. Lys-189 serves as the catalytic Proton donor/acceptor.

It belongs to the DeoC/FbaB aldolase family. DeoC type 1 subfamily.

It is found in the cytoplasm. It carries out the reaction 2-deoxy-D-ribose 5-phosphate = D-glyceraldehyde 3-phosphate + acetaldehyde. It participates in carbohydrate degradation; 2-deoxy-D-ribose 1-phosphate degradation; D-glyceraldehyde 3-phosphate and acetaldehyde from 2-deoxy-alpha-D-ribose 1-phosphate: step 2/2. In terms of biological role, catalyzes a reversible aldol reaction between acetaldehyde and D-glyceraldehyde 3-phosphate to generate 2-deoxy-D-ribose 5-phosphate. This chain is Deoxyribose-phosphate aldolase, found in Mycobacterium bovis (strain ATCC BAA-935 / AF2122/97).